Consider the following 324-residue polypeptide: Alkanal monooxygenase beta chain (324 aa).

This sequence belongs to the bacterial luciferase oxidoreductase family. Heterodimer of an alpha and a beta chain.

It catalyses the reaction a long-chain fatty aldehyde + FMNH2 + O2 = a long-chain fatty acid + hnu + FMN + H2O + 2 H(+). Its function is as follows. Light-emitting reaction in luminous bacteria. The specific role of the beta subunit is unknown, but it is absolutely required for bioluminescence activity. This chain is Alkanal monooxygenase beta chain (luxB), found in Photorhabdus laumondii subsp. laumondii (strain DSM 15139 / CIP 105565 / TT01) (Photorhabdus luminescens subsp. laumondii).